The primary structure comprises 102 residues: MNKQKIRIKLKAFEHTILDQSAAKIVETAKRTGASVSGPIPLPTERSLYTVLRSPHIDKDSREQFELKVHKRLIDIIDPTPKTIDALMRIDLPAGVDIEIKL.

The protein belongs to the universal ribosomal protein uS10 family. As to quaternary structure, part of the 30S ribosomal subunit.

In terms of biological role, involved in the binding of tRNA to the ribosomes. The chain is Small ribosomal subunit protein uS10 from Carboxydothermus hydrogenoformans (strain ATCC BAA-161 / DSM 6008 / Z-2901).